A 616-amino-acid polypeptide reads, in one-letter code: Homeodomain-interacting protein kinase 4 (616 aa).

Residues 11–347 (YDIIEVLGKG…PSAALRHPFV (337 aa)) form the Protein kinase domain. Residues 17–25 (LGKGTFGEV) and Lys-40 each bind ATP. Asp-136 acts as the Proton acceptor in catalysis. The segment at 486 to 616 (HKARKPPAGS…SFLQHVTGHH (131 aa)) is disordered. Residues 496-511 (KSDSNFSNLIRLSQVS) show a composition bias toward polar residues. Ser-511 is modified (phosphoserine).

This sequence belongs to the protein kinase superfamily. CMGC Ser/Thr protein kinase family. HIPK subfamily. Autophosphorylated.

Its subcellular location is the cytoplasm. It carries out the reaction L-seryl-[protein] + ATP = O-phospho-L-seryl-[protein] + ADP + H(+). The catalysed reaction is L-threonyl-[protein] + ATP = O-phospho-L-threonyl-[protein] + ADP + H(+). In terms of biological role, protein kinase that phosphorylates human TP53 at Ser-9, and thus induces TP53 repression of BIRC5 promoter. May act as a corepressor of transcription factors (Potential). The protein is Homeodomain-interacting protein kinase 4 (HIPK4) of Homo sapiens (Human).